The primary structure comprises 466 residues: Reticulophagy regulator 3 (466 aa).

Residues 1-28 are disordered; it reads MAEAEGVPTTPGPASGSTFRGRRDVSGS. Residue Ala2 is modified to N-acetylalanine. Over 2–80 the chain is Cytoplasmic; it reads AEAEGVPTTP…WCLGLNAAFW (79 aa). Position 10 is a phosphothreonine (Thr10). The residue at position 26 (Ser26) is a Phosphoserine. Residues 81-101 form a helical membrane-spanning segment; sequence FFALTSLRLVFLLAFGLMIIV. Over 102-163 the chain is Lumenal; sequence CIDQWKNKIW…FIRNVLLFKK (62 aa). A helical membrane pass occupies residues 164–184; the sequence is QNPGKFCLLSCGILTFLAVLG. Topologically, residues 185-186 are cytoplasmic; that stretch reads RY. Residues 187-207 form a helical membrane-spanning segment; that stretch reads VPGLLLSYLMLVTVMMWPLAV. Residues 208 to 381 are Lumenal-facing; the sequence is YHRLWDRAYV…ASRDEAALPE (174 aa). 2 positions are modified to phosphoserine: Ser258 and Ser260. Position 283 is a phosphothreonine (Thr283). Residues 284–374 are disordered; it reads DSEHSDAEVS…EEPQAPPASR (91 aa). Phosphoserine is present on residues Ser285, Ser288, Ser293, and Ser303. Positions 294-310 are enriched in polar residues; sequence CTDNGTFNLSRGQTPLT. 2 positions are modified to phosphothreonine: Thr307 and Thr310. Ser313, Ser320, and Ser360 each carry phosphoserine. A compositionally biased stretch (basic and acidic residues) spans 316–331; sequence LDGHSDPEESFARDLP. The helical transmembrane segment at 382-402 threads the bilayer; it reads LLLGALPVGSNLTSNLASLVS. The Cytoplasmic segment spans residues 403-466; that stretch reads QGMIQLALSG…QLDPASSRSH (64 aa). A disordered region spans residues 412–466; sequence GASQPGPSGAPAQRATRGFLRSPSSDLDTDAEGDDFELLDQSELSQLDPASSRSH. A compositionally biased stretch (acidic residues) spans 438-451; it reads LDTDAEGDDFELLD. Phosphothreonine is present on Thr440. An LIR motif motif is present at residues 445 to 450; sequence DDFELL. The segment covering 453–466 has biased composition (polar residues); that stretch reads SELSQLDPASSRSH.

This sequence belongs to the RETREG family. Interacts with ATG8 family modifier proteins MAP1LC3A, MAP1LC3B, MAP1LC3C, GABARAP, GABARAPL1 and GABARAPL2. Interacts with CANX. Interacts with RTN4 isoform B.

Its subcellular location is the endoplasmic reticulum membrane. Functionally, endoplasmic reticulum (ER)-anchored autophagy regulator which exists in an inactive state under basal conditions but is activated following cellular stress. When activated, induces ER fragmentation and mediates ER delivery into lysosomes through sequestration into autophagosomes via interaction with ATG8 family proteins. Promotes ER membrane curvature and ER tubulation required for subsequent ER fragmentation and engulfment into autophagosomes. Required for collagen quality control in a LIR motif-dependent manner. Mediates NRF1-enhanced neurite outgrowth. The protein is Reticulophagy regulator 3 of Homo sapiens (Human).